The primary structure comprises 191 residues: Chorion class B protein Ld10 (191 aa).

The first 21 residues, 1 to 21 (MSAKIILVFCAQALFVQSALS), serve as a signal peptide directing secretion.

It belongs to the chorion protein family.

This protein is one of many from the eggshell of the gypsy moth. This is Chorion class B protein Ld10 from Lymantria dispar (Gypsy moth).